We begin with the raw amino-acid sequence, 212 residues long: uncharacterized protein (212 aa).

Positions 1–18 (MIPLVALLVLLTLQASPG) are cleaved as a signal peptide. Residues 186 to 208 (IYRLATFFMVSLFVGSFVALVFV) traverse the membrane as a helical segment.

The protein to A.fulgidus AF_0540.

It is found in the membrane. This is an uncharacterized protein from Archaeoglobus fulgidus (strain ATCC 49558 / DSM 4304 / JCM 9628 / NBRC 100126 / VC-16).